Consider the following 989-residue polypeptide: MTSKESKPSRTTWRGMEPPLRETWNQVLQELVKRQQQEEEEQQGLVSGKKKSWVSIDLLGTEGKDIKKVNIWEPCEKWFAQVIWGVLWVLQIVLWGCLMWEMRKGNQCQAEEVIALVSDPGGFQRVQHVETVPVTCVTKNFTQWGCQPEGAYPDPELEYRNISREILEEVYKQDWPWNTYHWPLWQMENMRQWMKENEKEYKERTNKTKEDIDDLVAGRIRGRFCVPYPYALLRCEEWCWYPESINQETGHAEKIKINCTKAKAVSCTEKMPLAAVQRVYWEKEDEESMKFLNIKACNISLRCQDEGKSPGGCVQGYPIPKGAEIIPEAMKYLRGKKSRYGGIKDKNGELKLPLSVRVWVRMANLSGWVNGTPPYWSARVNGSTGINGTRWYGVGTLHHLGYNISSNPERGICDFTGELWIGGDKFPYYYKPSWNCSQNWTGHPVWQVFRYLDMTEHMTSRCIQRPERHNITVGNGTITGNCSVTNWDGCNCTRSGNHLYNSTSGGLLVIICRQNSTITGIMGTNTNWTTMWNIYQNCSKCNNSSLDRTGNGTLGTVNDLKCSLPHRNESNKWTCAARRKGSRRDSLYIAGRDFWGRVKAKYSCESNLGGLDSMMHQQMLLQRYQVIRVRAYTYGVVEMPQSYMEAQGENRRSRRNLQRKKRGIGLVIVLAIMAIIAAAGAGLGVANAVQQSYTRTAVQSLANATAAQQEVLEASYAMVQHIAKGIRILEARVARVEALVDRMMVYHELDCWHYQHYCVTSTRSEVANYVNWTRFKDNCTWQQWEEEIEQHEGNLSLLLREAALQVHIAQRDARRIPDAWKAIQEAFNWSSWFSWLKYIPWIIMGIVGLICFRILMCVISMCLQAYKQVKQIRYTQVTVVIEAPVELEEKQKRNGDGTNGCASLERERRTSHRSFIQIWRATWWAWKTSPWRHSWRTMPYITLLPMLVIWQWMEENGWNGENQHKKKKERVDCQDREQMPTLENDYVEL.

The N-terminal stretch at 1-106 is a signal peptide; it reads MTSKESKPSR…CLMWEMRKGN (106 aa). The Extracellular segment spans residues 107–838; sequence QCQAEEVIAL…WSSWFSWLKY (732 aa). Asn-140, Asn-161, Asn-206, Asn-258, Asn-298, Asn-364, Asn-381, Asn-387, Asn-403, Asn-435, Asn-439, Asn-470, Asn-475, Asn-481, Asn-491, Asn-501, Asn-515, Asn-527, Asn-537, Asn-542, Asn-543, Asn-551, and Asn-568 each carry an N-linked (GlcNAc...) asparagine; by host glycan. The fusion peptide stretch occupies residues 663-683; the sequence is GIGLVIVLAIMAIIAAAGAGL. Positions 695 to 745 form a coiled coil; it reads RTAVQSLANATAAQQEVLEASYAMVQHIAKGIRILEARVARVEALVDRMMV. Asn-703 is a glycosylation site (N-linked (GlcNAc...) asparagine; by host). Positions 729–745 are immunosuppression; sequence LEARVARVEALVDRMMV. Asn-771, Asn-778, Asn-794, and Asn-828 each carry an N-linked (GlcNAc...) asparagine; by host glycan. A coiled-coil region spans residues 786-821; that stretch reads EEIEQHEGNLSLLLREAALQVHIAQRDARRIPDAWK. The helical transmembrane segment at 839-859 threads the bilayer; that stretch reads IPWIIMGIVGLICFRILMCVI. Topologically, residues 860 to 989 are cytoplasmic; sequence SMCLQAYKQV…PTLENDYVEL (130 aa). Cys-862 carries S-palmitoyl cysteine; by host lipidation.

In terms of assembly, the mature envelope protein (Env) consists of a trimer of SU-TM heterodimers attached by noncovalent interactions or by a labile interchain disulfide bond. In terms of processing, specific enzymatic cleavages in vivo yield mature proteins. Envelope glycoproteins are synthesized as an inactive precursor that is N-glycosylated and processed likely by host cell furin or by a furin-like protease in the Golgi to yield the mature SU and TM proteins. The cleavage site between SU and TM requires the minimal sequence [KR]-X-[KR]-R. Post-translationally, the transmembrane protein is palmitoylated.

It localises to the virion membrane. Its subcellular location is the host cell membrane. The surface protein (SU) attaches the virus to the host cell by binding to its receptor. This interaction triggers the refolding of the transmembrane protein (TM) and is thought to activate its fusogenic potential by unmasking its fusion peptide. Fusion occurs at the host cell plasma membrane. In terms of biological role, the transmembrane protein (TM) acts as a class I viral fusion protein. Under the current model, the protein has at least 3 conformational states: pre-fusion native state, pre-hairpin intermediate state, and post-fusion hairpin state. During viral and target cell membrane fusion, the coiled coil regions (heptad repeats) assume a trimer-of-hairpins structure, positioning the fusion peptide in close proximity to the C-terminal region of the ectodomain. The formation of this structure appears to drive apposition and subsequent fusion of viral and target cell membranes. Membranes fusion leads to delivery of the nucleocapsid into the cytoplasm. The protein is Envelope glycoprotein gp160 (env) of Ovis aries (Sheep).